Here is a 130-residue protein sequence, read N- to C-terminus: Small ribosomal subunit protein uS9 (130 aa).

The disordered stretch occupies residues 105–130; that stretch reads TRDPRMKERKKYGLHKARKAPQYSKR. Residues 111 to 130 are compositionally biased toward basic residues; the sequence is KERKKYGLHKARKAPQYSKR.

This sequence belongs to the universal ribosomal protein uS9 family.

This Syntrophomonas wolfei subsp. wolfei (strain DSM 2245B / Goettingen) protein is Small ribosomal subunit protein uS9.